A 260-amino-acid chain; its full sequence is Adenosylcobinamide-GDP ribazoletransferase (260 aa).

The next 7 helical transmembrane spans lie at 31–51 (IIFF…LVNI), 55–75 (IFSS…VRGI), 111–131 (VIGV…FAFV), 140–160 (FLIF…LMYY), 177–197 (ISSW…VYFT), 202–222 (FIFL…LKKF), and 234–254 (HLGA…LLGE).

The protein belongs to the CobS family. Mg(2+) serves as cofactor.

It is found in the cell inner membrane. The catalysed reaction is alpha-ribazole + adenosylcob(III)inamide-GDP = adenosylcob(III)alamin + GMP + H(+). It catalyses the reaction alpha-ribazole 5'-phosphate + adenosylcob(III)inamide-GDP = adenosylcob(III)alamin 5'-phosphate + GMP + H(+). It participates in cofactor biosynthesis; adenosylcobalamin biosynthesis; adenosylcobalamin from cob(II)yrinate a,c-diamide: step 7/7. In terms of biological role, joins adenosylcobinamide-GDP and alpha-ribazole to generate adenosylcobalamin (Ado-cobalamin). Also synthesizes adenosylcobalamin 5'-phosphate from adenosylcobinamide-GDP and alpha-ribazole 5'-phosphate. This chain is Adenosylcobinamide-GDP ribazoletransferase, found in Thermodesulfovibrio yellowstonii (strain ATCC 51303 / DSM 11347 / YP87).